A 677-amino-acid chain; its full sequence is Probable sulfate transporter 4.2 (677 aa).

Over 1–83 (MSLAVKDLST…RTYRWHQYFK (83 aa)) the chain is Cytoplasmic. A helical transmembrane segment spans residues 84–104 (LDLMAGITVGIMLVPQAMSYA). Residues 105-108 (RLAG) lie on the Extracellular side of the membrane. A helical membrane pass occupies residues 109-129 (LQPIYGLYSSFVPVFVYAVFG). Topologically, residues 130–133 (SSRQ) are cytoplasmic. The chain crosses the membrane as a helical span at residues 134 to 154 (LAVGPVALVSLLVSNALSGIV). Over 155 to 161 (DPSEELY) the chain is Extracellular. Residues 162-182 (TELAILLALMVGIFESIMGFL) traverse the membrane as a helical segment. Residues 183 to 189 (RLGWLIR) lie on the Cytoplasmic side of the membrane. The helical transmembrane segment at 190 to 210 (FISHSVISGFTTASAVVIGLS) threads the bilayer. Residues 211 to 241 (QLKYFLGYSVSRSSKIMPVIDSIIAGADQFK) lie on the Extracellular side of the membrane. Residues 242–262 (WPPFLLGCTILVILLVMKHVG) form a helical membrane-spanning segment. The Cytoplasmic portion of the chain corresponds to 263 to 269 (KAKKELR). The helical transmembrane segment at 270-290 (FIRAAGPLTGLALGTIIAKVF) threads the bilayer. Residues 291-318 (HPPSITLVGDIPQGLPKFSFPKSFDHAK) lie on the Extracellular side of the membrane. Residues 319–339 (LLLPTSALITGVAILESVGIA) traverse the membrane as a helical segment. Topologically, residues 340 to 355 (KALAAKNRYELDSNSE) are cytoplasmic. Residues 356 to 376 (LFGLGVANIFGSLFSAYPTTG) traverse the membrane as a helical segment. Topologically, residues 377-392 (SFSRSAVNSESEAKTG) are extracellular. A helical transmembrane segment spans residues 393–413 (LSGLVTGIIIGCSLLFLTPMF). The Cytoplasmic portion of the chain corresponds to 414 to 420 (KFIPQCA). Residues 421 to 441 (LAAIVISAVSGLVDYEGAIFL) traverse the membrane as a helical segment. At 442–459 (WRVDKRDFTLWTITSTTT) the chain is on the extracellular side. A helical transmembrane segment spans residues 460-480 (LFFGIEIGVLIGVGFSLAFVI). At 481-677 (HESANPHIAV…LEEPLLSREK (197 aa)) the chain is on the cytoplasmic side. Positions 505-629 (QYPEAYTYNG…VRVHDAVQVC (125 aa)) constitute an STAS domain.

The protein belongs to the SLC26A/SulP transporter (TC 2.A.53) family.

Its subcellular location is the membrane. H(+)/sulfate cotransporter that may play a role in the regulation of sulfate assimilation. The sequence is that of Probable sulfate transporter 4.2 (SULTR4;2) from Arabidopsis thaliana (Mouse-ear cress).